The chain runs to 509 residues: ATP synthase subunit alpha (509 aa).

169–176 (GDRQTGKT) lines the ATP pocket.

The protein belongs to the ATPase alpha/beta chains family. As to quaternary structure, F-type ATPases have 2 components, CF(1) - the catalytic core - and CF(0) - the membrane proton channel. CF(1) has five subunits: alpha(3), beta(3), gamma(1), delta(1), epsilon(1). CF(0) has three main subunits: a(1), b(2) and c(9-12). The alpha and beta chains form an alternating ring which encloses part of the gamma chain. CF(1) is attached to CF(0) by a central stalk formed by the gamma and epsilon chains, while a peripheral stalk is formed by the delta and b chains.

Its subcellular location is the cell inner membrane. It carries out the reaction ATP + H2O + 4 H(+)(in) = ADP + phosphate + 5 H(+)(out). In terms of biological role, produces ATP from ADP in the presence of a proton gradient across the membrane. The alpha chain is a regulatory subunit. The sequence is that of ATP synthase subunit alpha from Agrobacterium fabrum (strain C58 / ATCC 33970) (Agrobacterium tumefaciens (strain C58)).